We begin with the raw amino-acid sequence, 133 residues long: Salmonella pathogenicity island 2 protein C (133 aa).

As to quaternary structure, interacts with the mammalian NIPSNAP3A and HOOK3 proteins in infected cells.

The protein localises to the secreted. It localises to the cytoplasm. Virulence protein that plays a central role in mammalian macrophage infection, by inhibiting phagosome-lysosome fusion and cellular trafficking, including trafficking of organelles that are devoid of Salmonella. May act by disrupting the function of the mammalian HOOK3 protein, a protein involved in the cellular traffic. Also required for actin ADP-ribosylase SpvB activity. This chain is Salmonella pathogenicity island 2 protein C (spiC), found in Salmonella typhimurium (strain 14028s / SGSC 2262).